A 304-amino-acid polypeptide reads, in one-letter code: MSRSFYVDSLIIKDTSRPAPSLPEPHPGPDFFIPLGMPPPLVMSVSGPGCPSRKSGAFCVCPLCVTSHLHSSRGSVGAGSGGAGAGVTGAGGSGVAGAAGALPLLKGQFSSAPGDAQFCPRVNHAHHHHHPPQHHHHHHQPQQPGSAAAAAAAAAAAAAAAALGHPQHHAPVCTATTYNVADPRRFHCLTMGGSDASQVPNGKRMRTAFTSTQLLELEREFSSNMYLSRLRRIEIATYLNLSEKQVKIWFQNRRVKHKKEGKGTQRNSHAGCKCVGSQVHYARSEDEDSLSPASANDDKEISPL.

Residues 116–151 (AQFCPRVNHAHHHHHPPQHHHHHHQPQQPGSAAAAA) form a disordered region. Basic residues predominate over residues 123-140 (NHAHHHHHPPQHHHHHHQ). Residues 141–151 (PQQPGSAAAAA) show a composition bias toward low complexity. The homeobox DNA-binding region spans 202 to 261 (GKRMRTAFTSTQLLELEREFSSNMYLSRLRRIEIATYLNLSEKQVKIWFQNRRVKHKKEG). Positions 283–304 (RSEDEDSLSPASANDDKEISPL) are disordered.

Belongs to the Antp homeobox family.

The protein resides in the nucleus. It is found in the cytoplasm. In terms of biological role, transcription factor that binds 5'-CNAATTAG-3' DNA sequence and regulates the expression of numerous genes including genes important for brain development. During telencephalic development, causes ventralization of pallial progenitors and, depending on the developmental stage, specifies different neuronal fates. At early stages, necessary and sufficient to correctly specify the ventral lateral ganglionic eminence (LGE) and its major derivatives, the striatal projection neurons. At later stages, may specify LGE progenitors toward dorsal LGE fates, including olfactory bulb interneurons. This Homo sapiens (Human) protein is GS homeobox 2 (GSX2).